A 389-amino-acid chain; its full sequence is Probable tRNA sulfurtransferase (389 aa).

One can recognise a THUMP domain in the interval 57–165; it reads DEALDRLSKI…EDETYIYHRV (109 aa). ATP-binding positions include 183 to 184, Lys-267, Gly-289, and Gln-298; that span reads LL.

Belongs to the ThiI family.

The protein localises to the cytoplasm. The enzyme catalyses [ThiI sulfur-carrier protein]-S-sulfanyl-L-cysteine + a uridine in tRNA + 2 reduced [2Fe-2S]-[ferredoxin] + ATP + H(+) = [ThiI sulfur-carrier protein]-L-cysteine + a 4-thiouridine in tRNA + 2 oxidized [2Fe-2S]-[ferredoxin] + AMP + diphosphate. It catalyses the reaction [ThiS sulfur-carrier protein]-C-terminal Gly-Gly-AMP + S-sulfanyl-L-cysteinyl-[cysteine desulfurase] + AH2 = [ThiS sulfur-carrier protein]-C-terminal-Gly-aminoethanethioate + L-cysteinyl-[cysteine desulfurase] + A + AMP + 2 H(+). The protein operates within cofactor biosynthesis; thiamine diphosphate biosynthesis. Functionally, catalyzes the ATP-dependent transfer of a sulfur to tRNA to produce 4-thiouridine in position 8 of tRNAs, which functions as a near-UV photosensor. Also catalyzes the transfer of sulfur to the sulfur carrier protein ThiS, forming ThiS-thiocarboxylate. This is a step in the synthesis of thiazole, in the thiamine biosynthesis pathway. The sulfur is donated as persulfide by IscS. The polypeptide is Probable tRNA sulfurtransferase (Methanothermobacter thermautotrophicus (strain ATCC 29096 / DSM 1053 / JCM 10044 / NBRC 100330 / Delta H) (Methanobacterium thermoautotrophicum)).